A 735-amino-acid polypeptide reads, in one-letter code: Coiled-coil quantitatively-enriched protein 1 (735 aa).

A coiled-coil region spans residues 514–719 (AAVQYLQRRL…TLKILEQKSL (206 aa)).

Interacts (during meiosis) with pcp1. Interacts with clr3, pot1, taz1 and tpz1.

The protein localises to the nucleus. It is found in the nucleoplasm. It localises to the chromosome. The protein resides in the telomere. Its function is as follows. Component of the meiotic bouquet that facilitates meiotic nuclear reorganization of the telomeres to the centrosome. Links telomeres to the meiotic centrosome component pcp1. Essential for the formation of normal telomere clusters during meiotic prophase. Required for telomere length regulation and chromosome segregation. Required for proper positioning of nucleosomes at heterochromatic loci and for transcriptional gene silencing (TGS) function of the Snf2/Hdac-containing repressor complex (SHREC). The sequence is that of Coiled-coil quantitatively-enriched protein 1 (ccq1) from Schizosaccharomyces pombe (strain 972 / ATCC 24843) (Fission yeast).